The primary structure comprises 492 residues: Transmembrane protein 39B (492 aa).

Residues 1-54 (MGGRRGPNRTSYCRNPLCEPGSSGGSSGSHTSSASVTSVRSRTRSSSGTGLSSP) are disordered. Residue N8 is glycosylated (N-linked (GlcNAc...) asparagine). Residues 28 to 53 (GSHTSSASVTSVRSRTRSSSGTGLSS) show a composition bias toward low complexity. A run of 8 helical transmembrane segments spans residues 77–97 (SILF…VHYI), 115–135 (TSLN…IVLG), 153–175 (SLFR…GWSL), 185–205 (TYSF…IPFL), 288–308 (EVLV…VWFV), 322–342 (LFLL…LPAS), 421–441 (ILNI…YSLM), and 447–467 (HQTI…FKLL).

Belongs to the TMEM39 family.

It localises to the endoplasmic reticulum membrane. Functionally, may protect the cells against DNA damage caused by exposure to the cold-warming stress and facilitates tissue damage repair during the recovery phase. This is Transmembrane protein 39B from Homo sapiens (Human).